A 477-amino-acid polypeptide reads, in one-letter code: Glycogen synthase (477 aa).

Residue K15 participates in ADP-alpha-D-glucose binding.

This sequence belongs to the glycosyltransferase 1 family. Bacterial/plant glycogen synthase subfamily.

It catalyses the reaction [(1-&gt;4)-alpha-D-glucosyl](n) + ADP-alpha-D-glucose = [(1-&gt;4)-alpha-D-glucosyl](n+1) + ADP + H(+). It participates in glycan biosynthesis; glycogen biosynthesis. Functionally, synthesizes alpha-1,4-glucan chains using ADP-glucose. The sequence is that of Glycogen synthase from Escherichia fergusonii (strain ATCC 35469 / DSM 13698 / CCUG 18766 / IAM 14443 / JCM 21226 / LMG 7866 / NBRC 102419 / NCTC 12128 / CDC 0568-73).